The following is a 768-amino-acid chain: MTIINSNLGYPRLGEHREWKHLLEHFWKGQLDNVTFHATAKKLRLANLKKQRDLGVDYIPVADNSDYDHVLDTLVAFNAIPSRFGHFDHQLDLPDYYAIARGTDTAVAAEMTKWFNINYHYIVPEFDDVSFKLLDNRWLRYYQEAKQELGIDGKPVILGPISFLKLGKRHGQYLDDAAVNELLPQLLPLYQQVFEELATAGAKWIQLDEPTLVKTTTVAELAPYQTALEHLHAAVPSLKIELQTYFDSLDQYDKIVTWPIQALGLDLVHDHGENLAHLVDHGFPTDKILAAGIIDGHNVWASDLQAKLALVQQLRQIVTDDQLWLQPANSLLHVPITTKNETKADPVLLGGLAFADQKLAELHTLTVAANQGVAAVQAVFDHNQANLTALNQSSHRNNQSVRAAEAQLSNQKFERQAPFATRIKLQHDRLHLPLLPTTTIGSFPQSAQVRAKRAAWRKGNLTDADYQAFLHAETKRWIKLQEDLGLDVLVHGEFERTDMVEYFGQKLTGFYATQNGWVQSYGSRGVRPPVIFGDVAYTEPITVAESVYAQSLTDQPVKGMLTAPLTIINWSFVRDDIPRAQVQNQIALALRQEVQNLEKAGIKIIQVDEPALREGLPLKQRHWQAYLDEAVYSFKITTTGVQNDTQIHTHMCYSNFADIINTIKALDADVISIETSRSHGEIISAFEQTGYDQEIGLGVYDIHSPRVPSVAEIEANIQRALRVIDARQFWINPDCGLKTRQESETLAALKNMIAARNAIQAQLTTSIH.

Residues 17-20 and lysine 113 each bind 5-methyltetrahydropteroyltri-L-glutamate; that span reads REWK. L-homocysteine is bound by residues 440–442 and glutamate 493; that span reads IGS. Residues 440–442 and glutamate 493 each bind L-methionine; that span reads IGS. Tryptophan 570 is a 5-methyltetrahydropteroyltri-L-glutamate binding site. Aspartate 608 is an L-homocysteine binding site. Residue aspartate 608 participates in L-methionine binding. Position 614 (glutamate 614) interacts with 5-methyltetrahydropteroyltri-L-glutamate. Positions 650, 652, and 674 each coordinate Zn(2+). The Proton donor role is filled by histidine 703. Residue cysteine 735 participates in Zn(2+) binding.

The protein belongs to the vitamin-B12 independent methionine synthase family. It depends on Zn(2+) as a cofactor.

The enzyme catalyses 5-methyltetrahydropteroyltri-L-glutamate + L-homocysteine = tetrahydropteroyltri-L-glutamate + L-methionine. Its pathway is amino-acid biosynthesis; L-methionine biosynthesis via de novo pathway; L-methionine from L-homocysteine (MetE route): step 1/1. Its function is as follows. Catalyzes the transfer of a methyl group from 5-methyltetrahydrofolate to homocysteine resulting in methionine formation. This is 5-methyltetrahydropteroyltriglutamate--homocysteine methyltransferase from Lactiplantibacillus plantarum (strain ATCC BAA-793 / NCIMB 8826 / WCFS1) (Lactobacillus plantarum).